We begin with the raw amino-acid sequence, 167 residues long: Bacterial non-heme ferritin (167 aa).

A Ferritin-like diiron domain is found at 1–145 (MLSKDIIKLL…DILDKIELIG (145 aa)). Glutamate 17, glutamate 50, histidine 53, glutamate 94, and glutamine 127 together coordinate Fe cation.

The protein belongs to the ferritin family. Prokaryotic subfamily. In terms of assembly, homooligomer of 24 subunits that assemble into a spherical protein shell (12 +/- 1 nM diameter) that can sequester at least 2000 iron atoms.

It localises to the cytoplasm. It carries out the reaction 4 Fe(2+) + O2 + 6 H2O = 4 iron(III) oxide-hydroxide + 12 H(+). Iron-storage protein. In Helicobacter pylori (strain ATCC 700392 / 26695) (Campylobacter pylori), this protein is Bacterial non-heme ferritin (ftnA).